A 137-amino-acid polypeptide reads, in one-letter code: Large ribosomal subunit protein uL16 (137 aa).

The span at 1–13 (MLQPKRRKYRKEQ) shows a compositional bias: basic residues. Residues 1–22 (MLQPKRRKYRKEQKGRNTGVAT) are disordered.

It belongs to the universal ribosomal protein uL16 family. In terms of assembly, part of the 50S ribosomal subunit.

Functionally, binds 23S rRNA and is also seen to make contacts with the A and possibly P site tRNAs. This is Large ribosomal subunit protein uL16 from Polynucleobacter asymbioticus (strain DSM 18221 / CIP 109841 / QLW-P1DMWA-1) (Polynucleobacter necessarius subsp. asymbioticus).